Reading from the N-terminus, the 54-residue chain is UPF0391 membrane protein Mpe_A2904 (54 aa).

The next 2 membrane-spanning stretches (helical) occupy residues 5 to 25 (AVVFFIIALIAAVFGFGGIAA) and 30 to 50 (IAKILFFVFVVLAVASFLFGL).

This sequence belongs to the UPF0391 family.

The protein resides in the cell membrane. The polypeptide is UPF0391 membrane protein Mpe_A2904 (Methylibium petroleiphilum (strain ATCC BAA-1232 / LMG 22953 / PM1)).